Here is a 274-residue protein sequence, read N- to C-terminus: MAINLYKTSTPSTRNGAVDSQVKSNPRNNLIYGQHHCGKGRNARGIITVRHRGGGHKRLYRKIDFRRNAKDIYGRIVTIEYDPNRNAYICLIHYGDGEKRYILHPRGAIIGDTIVSGTEVPIKMGNALPLTDMPLGTAIHNIEITLGKGGQLARAAGAVAKLIAKEGKSATLKLPSGEVRLISKNCSATVGQVGNVGVNQKSLGRAGSKCWLGKRPVVRGVVMNPVDHPHGGGEGRAPIGRKKPVTPWGYPALGRRTRKRKKYSETLILRRRSK.

Residues 1-15 (MAINLYKTSTPSTRN) show a composition bias toward polar residues. Disordered regions lie at residues 1–22 (MAIN…DSQV) and 225–274 (PVDH…RRSK).

It belongs to the universal ribosomal protein uL2 family. In terms of assembly, part of the 50S ribosomal subunit.

It localises to the plastid. The protein resides in the chloroplast. The polypeptide is Large ribosomal subunit protein uL2cz/uL2cy (rpl2-A) (Lobularia maritima (Sweet alyssum)).